Reading from the N-terminus, the 63-residue chain is Large ribosomal subunit protein bL32 (63 aa).

The disordered stretch occupies residues 1 to 22; that stretch reads MANPKAKMSKSRRDKRRAQFNA. Residues 7 to 18 are compositionally biased toward basic residues; it reads KMSKSRRDKRRA.

Belongs to the bacterial ribosomal protein bL32 family.

This Chlorobium limicola (strain DSM 245 / NBRC 103803 / 6330) protein is Large ribosomal subunit protein bL32.